A 348-amino-acid chain; its full sequence is Dihydroorotase (348 aa).

Residues His14 and His16 each contribute to the Zn(2+) site. Substrate-binding positions include 16 to 18 (HLR) and Asn42. Positions 100, 137, and 175 each coordinate Zn(2+). Lys100 carries the N6-carboxylysine modification. His137 provides a ligand contact to substrate. Leu220 is a substrate binding site. Residue Asp248 coordinates Zn(2+). Asp248 is a catalytic residue. 2 residues coordinate substrate: His252 and Ala264.

Belongs to the metallo-dependent hydrolases superfamily. DHOase family. Class II DHOase subfamily. As to quaternary structure, homodimer. Zn(2+) is required as a cofactor.

It carries out the reaction (S)-dihydroorotate + H2O = N-carbamoyl-L-aspartate + H(+). It participates in pyrimidine metabolism; UMP biosynthesis via de novo pathway; (S)-dihydroorotate from bicarbonate: step 3/3. In terms of biological role, catalyzes the reversible cyclization of carbamoyl aspartate to dihydroorotate. This is Dihydroorotase from Pseudomonas putida (strain ATCC 47054 / DSM 6125 / CFBP 8728 / NCIMB 11950 / KT2440).